We begin with the raw amino-acid sequence, 226 residues long: UPF0173 metal-dependent hydrolase SRU_1937 (226 aa).

Belongs to the UPF0173 family.

This Salinibacter ruber (strain DSM 13855 / M31) protein is UPF0173 metal-dependent hydrolase SRU_1937.